The following is a 207-amino-acid chain: MAEVAPAPAAAAPAKAPKKKAAAKPKKAGPSVGELIVKAVSASKERSGVSLAALKKSLAAGGYDVEKNNSRVKIAVKSLVTKGTLVQTKGTGASGSFKLNKKAVEAKKPAKKAAAPKAKKVAAKKPAAAKKPKKVAAKKAVAAKKSPKKAKKPATPKKAAKSPKKVKKPAAAAKKAAKSPKKATKAAKPKAAKPKAAKAKKAAPKKK.

Low complexity predominate over residues 1–15 (MAEVAPAPAAAAPAK). Disordered regions lie at residues 1-28 (MAEV…PKKA) and 105-207 (EAKK…PKKK). An N-acetylalanine modification is found at Ala-2. The span at 16–27 (APKKKAAAKPKK) shows a compositional bias: basic residues. In terms of domain architecture, H15 spans 28–101 (AGPSVGELIV…GASGSFKLNK (74 aa)). Composition is skewed to basic residues over residues 117–168 (KAKK…KVKK) and 175–207 (KAAK…PKKK).

The protein belongs to the histone H1/H5 family. Oncorhyncin II is expressed in skin.

It localises to the nucleus. The protein localises to the chromosome. Its subcellular location is the secreted. In terms of biological role, histones H1 are necessary for the condensation of nucleosome chains into higher-order structures. Its function is as follows. Oncorhyncin II has antibacterial activity against Gram-positive and Gram-negative bacteria at submicromolar concentrations. Potentially important role in mucosal defense. In Oncorhynchus mykiss (Rainbow trout), this protein is Histone H1.